A 142-amino-acid polypeptide reads, in one-letter code: Transcriptional regulator MraZ (142 aa).

SpoVT-AbrB domains lie at 5-47 (RFTH…PMDS) and 76-119 (ATVV…SPEN).

Belongs to the MraZ family. As to quaternary structure, forms oligomers.

It is found in the cytoplasm. Its subcellular location is the nucleoid. This chain is Transcriptional regulator MraZ, found in Thermomicrobium roseum (strain ATCC 27502 / DSM 5159 / P-2).